The primary structure comprises 396 residues: Subtilisin-like protease 5 (396 aa).

The signal sequence occupies residues 1–20 (MTGFFTILSFSLAALSVTNA). A propeptide spanning residues 21-116 (AQILSVPKGA…VEPDAIISQH (96 aa)) is cleaved from the precursor. Residues 37–113 (YIVVMKDDTS…VAFVEPDAII (77 aa)) enclose the Inhibitor I9 domain. Residue asparagine 63 is glycosylated (N-linked (GlcNAc...) asparagine). The region spanning 125-396 (PWGLSRLSNR…TRLLYNGSGR (272 aa)) is the Peptidase S8 domain. Residues aspartate 156 and histidine 187 each act as charge relay system in the active site. Residues asparagine 230 and asparagine 248 are each glycosylated (N-linked (GlcNAc...) asparagine). Residue serine 342 is the Charge relay system of the active site. Residues 377–389 (TIRNPGPDTTTRL) are compositionally biased toward polar residues. The segment at 377–396 (TIRNPGPDTTTRLLYNGSGR) is disordered. N-linked (GlcNAc...) asparagine glycosylation occurs at asparagine 392.

This sequence belongs to the peptidase S8 family.

The protein localises to the secreted. In terms of biological role, secreted subtilisin-like serine protease with keratinolytic activity that contributes to pathogenicity. The protein is Subtilisin-like protease 5 (SUB5) of Arthroderma benhamiae (Trichophyton mentagrophytes).